Reading from the N-terminus, the 283-residue chain is Small ribosomal subunit protein uS3 (283 aa).

The 69-residue stretch at 39-107 folds into the KH type-2 domain; that stretch reads VRAYLKTKLK…PVHVNIEEIR (69 aa). A disordered region spans residues 219-283; the sequence is ASDDDKKRRG…AAVSAEKAGE (65 aa). A compositionally biased stretch (basic and acidic residues) spans 221–236; sequence DDDKKRRGPRRDDGKP. Residues 237 to 260 show a composition bias toward low complexity; the sequence is SGRPRAPRPEGQPGAAAPGSAPAA.

It belongs to the universal ribosomal protein uS3 family. In terms of assembly, part of the 30S ribosomal subunit. Forms a tight complex with proteins S10 and S14.

In terms of biological role, binds the lower part of the 30S subunit head. Binds mRNA in the 70S ribosome, positioning it for translation. This chain is Small ribosomal subunit protein uS3, found in Janthinobacterium sp. (strain Marseille) (Minibacterium massiliensis).